We begin with the raw amino-acid sequence, 419 residues long: Histidine--tRNA ligase (419 aa).

This sequence belongs to the class-II aminoacyl-tRNA synthetase family. In terms of assembly, homodimer.

The protein resides in the cytoplasm. The enzyme catalyses tRNA(His) + L-histidine + ATP = L-histidyl-tRNA(His) + AMP + diphosphate + H(+). The sequence is that of Histidine--tRNA ligase from Caldicellulosiruptor saccharolyticus (strain ATCC 43494 / DSM 8903 / Tp8T 6331).